Consider the following 386-residue polypeptide: Probable copper-dependent oxygenase M1 (386 aa).

Positions 1-22 (MLRMKKICTAFLTIALCTHVLA) are cleaved as a signal peptide. N86 carries N-linked (GlcNAc...) asparagine glycosylation. Residues 334 to 354 (FVVPIAAIAFIALTIGAGYVF) traverse the membrane as a helical segment.

The protein belongs to the clz3 oxygenase family.

The protein localises to the membrane. It functions in the pathway secondary metabolite biosynthesis. In terms of biological role, probable copper-dependent oxygenase; part of the gene cluster that mediates the biosynthesis of squalestatin S1 (SQS1, also known as zaragozic acid A), a heavily oxidized fungal polyketide that offers potent cholesterol lowering activity by targeting squalene synthase (SS). SQS1 is composed of a 2,8-dioxobicyclic[3.2.1]octane-3,4,5-tricarboxyclic acid core that is connected to two lipophilic polyketide arms. These initial steps feature the priming of an unusual benzoic acid starter unit onto the highly reducing polyketide synthase pks2, followed by oxaloacetate extension and product release to generate a tricarboxylic acid containing product. The phenylalanine ammonia lyase (PAL) M7 and the acyl-CoA ligase M9 are involved in transforming phenylalanine into benzoyl-CoA. The citrate synthase-like protein R3 is involved in connecting the C-alpha-carbons of the hexaketide chain and oxaloacetate to afford the tricarboxylic acid unit. The potential hydrolytic enzymes, M8 and M10, are in close proximity to pks2 and may participate in product release. On the other side, the tetraketide arm is synthesized by a the squalestatin tetraketide synthase pks1 and enzymatically esterified to the core in the last biosynthetic step, by the acetyltransferase M4. The biosynthesis of the tetraketide must involve 3 rounds of chain extension. After the first and second rounds methyl-transfer occurs, and in all rounds of extension the ketoreductase and dehydratase are active. The enoyl reductase and C-MeT of pks1 are not active in the final round of extension. The acetyltransferase M4 appears to have a broad substrate selectivity for its acyl CoA substrate, allowing the in vitro synthesis of novel squalestatins. The biosynthesis of SQS1 requires several oxidative steps likely performed by oxidoreductases M1, R1 and R2. Finally, in support of the identification of the cluster as being responsible for SQS1 production, the cluster contains a gene encoding a putative squalene synthase (SS) R6, suggesting a likely mechanism for self-resistance. The polypeptide is Probable copper-dependent oxygenase M1 (Phoma sp. (strain ATCC 20986 / MF5453)).